The primary structure comprises 265 residues: Methylthioribulose-1-phosphate dehydratase (265 aa).

Cys118 provides a ligand contact to substrate. Residues His136 and His138 each contribute to the Zn(2+) site. Catalysis depends on Glu161, which acts as the Proton donor/acceptor. His226 is a binding site for Zn(2+).

This sequence belongs to the aldolase class II family. MtnB subfamily. Zn(2+) serves as cofactor.

It is found in the cytoplasm. The catalysed reaction is 5-(methylsulfanyl)-D-ribulose 1-phosphate = 5-methylsulfanyl-2,3-dioxopentyl phosphate + H2O. It participates in amino-acid biosynthesis; L-methionine biosynthesis via salvage pathway; L-methionine from S-methyl-5-thio-alpha-D-ribose 1-phosphate: step 2/6. Catalyzes the dehydration of methylthioribulose-1-phosphate (MTRu-1-P) into 2,3-diketo-5-methylthiopentyl-1-phosphate (DK-MTP-1-P). This Scheffersomyces stipitis (strain ATCC 58785 / CBS 6054 / NBRC 10063 / NRRL Y-11545) (Yeast) protein is Methylthioribulose-1-phosphate dehydratase.